Reading from the N-terminus, the 503-residue chain is Probable zinc metalloprotease UREG_01421 (503 aa).

The signal sequence occupies residues 1–24 (MHSLSSALAGSTFVLLFLCLLASA). N105 carries an N-linked (GlcNAc...) asparagine glycan. Zn(2+) contacts are provided by H176, D196, and E232. N247 carries an N-linked (GlcNAc...) asparagine glycan. D259 contributes to the Zn(2+) binding site. The region spanning 416–503 (MPRNVRVSTR…RGVAVLPFPA (88 aa)) is the Fibronectin type-III domain. A glycan (N-linked (GlcNAc...) asparagine) is linked at N429.

It belongs to the peptidase M28 family. M28B subfamily. Requires Zn(2+) as cofactor.

The protein localises to the secreted. This is Probable zinc metalloprotease UREG_01421 from Uncinocarpus reesii (strain UAMH 1704).